Here is a 394-residue protein sequence, read N- to C-terminus: Methylthioribose kinase (394 aa).

ATP is bound by residues N44, K61, and 115–117; that span reads EDL. D233 provides a ligand contact to substrate. 250–252 lines the ATP pocket; the sequence is DPE. Substrate is bound at residue R337.

Belongs to the methylthioribose kinase family. As to quaternary structure, homodimer.

The catalysed reaction is 5-(methylsulfanyl)-D-ribose + ATP = 5-(methylsulfanyl)-alpha-D-ribose 1-phosphate + ADP + H(+). It functions in the pathway amino-acid biosynthesis; L-methionine biosynthesis via salvage pathway; S-methyl-5-thio-alpha-D-ribose 1-phosphate from S-methyl-5'-thioadenosine (hydrolase route): step 2/2. Catalyzes the phosphorylation of methylthioribose into methylthioribose-1-phosphate. The polypeptide is Methylthioribose kinase (Bacillus velezensis (strain DSM 23117 / BGSC 10A6 / LMG 26770 / FZB42) (Bacillus amyloliquefaciens subsp. plantarum)).